A 327-amino-acid polypeptide reads, in one-letter code: Cytochrome c oxidase subunit 2 (327 aa).

A signal peptide spans 1–23 (MEQIPASIWTLTAGVVVTLISFW). The next 2 membrane-spanning stretches (helical) occupy residues 56–78 (LFLV…AGEE) and 96–114 (AIPA…DIFQ). Residues His221, Cys255, Cys259, and His263 each coordinate Cu cation.

This sequence belongs to the cytochrome c oxidase subunit 2 family. The cofactor is Cu cation.

The protein resides in the cell membrane. The enzyme catalyses 4 Fe(II)-[cytochrome c] + O2 + 8 H(+)(in) = 4 Fe(III)-[cytochrome c] + 2 H2O + 4 H(+)(out). Subunits I and II form the functional core of the enzyme complex. Electrons originating in cytochrome c are transferred via heme a and Cu(A) to the binuclear center formed by heme a3 and Cu(B). The chain is Cytochrome c oxidase subunit 2 (ctaC) from Thermostichus vulcanus (Synechococcus vulcanus).